Here is a 471-residue protein sequence, read N- to C-terminus: Tryptophanase (471 aa).

An N6-acetyllysine mark is found at K5, K115, and K156. N6-(pyridoxal phosphate)lysine is present on K270. K450 bears the N6-acetyllysine mark.

This sequence belongs to the beta-eliminating lyase family. As to quaternary structure, homotetramer. Requires pyridoxal 5'-phosphate as cofactor.

It catalyses the reaction L-tryptophan + H2O = indole + pyruvate + NH4(+). It participates in amino-acid degradation; L-tryptophan degradation via pyruvate pathway; indole and pyruvate from L-tryptophan: step 1/1. This is Tryptophanase from Escherichia fergusonii (strain ATCC 35469 / DSM 13698 / CCUG 18766 / IAM 14443 / JCM 21226 / LMG 7866 / NBRC 102419 / NCTC 12128 / CDC 0568-73).